Reading from the N-terminus, the 197-residue chain is Transposon Tn10 TetC protein (197 aa).

An HTH tetR-type domain is found at 12-72; sequence KSTYQSLVNS…ACYKQQLIMI (61 aa). The H-T-H motif DNA-binding region spans 35–54; the sequence is SIDEISGKALVTKGAFYHHF.

The polypeptide is Transposon Tn10 TetC protein (tetC) (Escherichia coli).